A 270-amino-acid polypeptide reads, in one-letter code: tRNA pseudouridine synthase A (270 aa).

D60 serves as the catalytic Nucleophile. The interval 107–111 (FHARF) is RNA binding. Y118 contributes to the substrate binding site. An interaction with tRNA region spans residues 168 to 172 (QCQSR).

Belongs to the tRNA pseudouridine synthase TruA family. Homodimer.

The catalysed reaction is uridine(38/39/40) in tRNA = pseudouridine(38/39/40) in tRNA. Its function is as follows. Formation of pseudouridine at positions 38, 39 and 40 in the anticodon stem and loop of transfer RNAs. The chain is tRNA pseudouridine synthase A from Shigella sonnei (strain Ss046).